The sequence spans 402 residues: Argininosuccinate synthase (402 aa).

ATP is bound by residues 11–19 (AYSGGLDTS) and Ala-39. Residues Tyr-90 and Ser-95 each coordinate L-citrulline. An ATP-binding site is contributed by Gly-120. L-aspartate contacts are provided by Thr-122, Asn-126, and Asp-127. An L-citrulline-binding site is contributed by Asn-126. Positions 130, 179, 188, 264, and 276 each coordinate L-citrulline.

This sequence belongs to the argininosuccinate synthase family. Type 1 subfamily. In terms of assembly, homotetramer.

It localises to the cytoplasm. The enzyme catalyses L-citrulline + L-aspartate + ATP = 2-(N(omega)-L-arginino)succinate + AMP + diphosphate + H(+). The protein operates within amino-acid biosynthesis; L-arginine biosynthesis; L-arginine from L-ornithine and carbamoyl phosphate: step 2/3. The protein is Argininosuccinate synthase of Roseiflexus castenholzii (strain DSM 13941 / HLO8).